Reading from the N-terminus, the 428-residue chain is Glutamate-1-semialdehyde 2,1-aminomutase 1 (428 aa).

The residue at position 268 (Lys-268) is an N6-(pyridoxal phosphate)lysine.

This sequence belongs to the class-III pyridoxal-phosphate-dependent aminotransferase family. HemL subfamily. Homodimer. Pyridoxal 5'-phosphate serves as cofactor.

It localises to the cytoplasm. It catalyses the reaction (S)-4-amino-5-oxopentanoate = 5-aminolevulinate. Its pathway is porphyrin-containing compound metabolism; protoporphyrin-IX biosynthesis; 5-aminolevulinate from L-glutamyl-tRNA(Glu): step 2/2. The protein is Glutamate-1-semialdehyde 2,1-aminomutase 1 of Geobacillus kaustophilus (strain HTA426).